The following is a 3218-amino-acid chain: Serine/threonine-protein kinase Smg1 (3218 aa).

The interval 32–78 is disordered; that stretch reads LNNNGNHGDSSNEGGGGNGSGRGGATGSGNIAGLGGSESMWSPGGGK. Over residues 33 to 43 the composition is skewed to low complexity; it reads NNNGNHGDSSN. Over residues 44–67 the composition is skewed to gly residues; it reads EGGGGNGSGRGGATGSGNIAGLGG. S70 carries the post-translational modification Phosphoserine. The region spanning 1289 to 1692 is the FAT domain; that stretch reads DAAAAAREEG…IFPAVVGANR (404 aa). The stretch at 1643-1678 is one HEAT repeat; that stretch reads APWKVIIPQLFSRLNHHEPYVRKSVCDLLCRLAKSR. The PI3K/PI4K catalytic domain maps to 1897–2232; it reads VESSVCVLPT…LGVGDLKYHK (336 aa). The G-loop stretch occupies residues 1903–1909; it reads VLPTKTK. The tract at residues 2101-2109 is catalytic loop; sequence GLGDRHLDN. Positions 2121–2145 are activation loop; it reads HIDYNVCFEKGRTLRIPEKVPFRLT. The FATC domain occupies 3186-3218; it reads QRSTVAEQVDYVIREACNPENLAVLYEGWTPWV.

This sequence belongs to the PI3/PI4-kinase family. As to quaternary structure, component of a post-splicing multiprotein NMD complex. It depends on Mn(2+) as a cofactor.

Its subcellular location is the cytoplasm. It catalyses the reaction L-seryl-[protein] + ATP = O-phospho-L-seryl-[protein] + ADP + H(+). The enzyme catalyses L-threonyl-[protein] + ATP = O-phospho-L-threonyl-[protein] + ADP + H(+). Functionally, serine/threonine protein kinase involved in mRNA surveillance. Recognizes the substrate consensus sequence [ST]-Q. Involved in nonsense-mediated decay (NMD) of mRNAs containing premature stop codons, probably by phosphorylating Upf1. This Drosophila melanogaster (Fruit fly) protein is Serine/threonine-protein kinase Smg1 (nonC).